The sequence spans 286 residues: 4-hydroxybenzoate octaprenyltransferase (286 aa).

7 helical membrane passes run 21 to 40 (GTLLLLWPCLMALMLAAGGM), 95 to 115 (ILFVILGLSAFGLVLLLNGLV), 142 to 162 (FLGIVWSWSIPMAYAAQTGEV), 167 to 187 (WWLFAANWCWTVAYDTMYAMV), 210 to 230 (QIIGLFQLAALACFIAAGWSA), 235 to 255 (LYGLGILTFVGFSTYQQMLIF), and 266 to 286 (FLNNNWAGLALFVGLGADYLI).

It belongs to the UbiA prenyltransferase family. Mg(2+) is required as a cofactor.

The protein localises to the cell inner membrane. It carries out the reaction all-trans-octaprenyl diphosphate + 4-hydroxybenzoate = 4-hydroxy-3-(all-trans-octaprenyl)benzoate + diphosphate. It participates in cofactor biosynthesis; ubiquinone biosynthesis. Its function is as follows. Catalyzes the prenylation of para-hydroxybenzoate (PHB) with an all-trans polyprenyl group. Mediates the second step in the final reaction sequence of ubiquinone-8 (UQ-8) biosynthesis, which is the condensation of the polyisoprenoid side chain with PHB, generating the first membrane-bound Q intermediate 3-octaprenyl-4-hydroxybenzoate. The sequence is that of 4-hydroxybenzoate octaprenyltransferase from Shewanella baltica (strain OS223).